Here is a 244-residue protein sequence, read N- to C-terminus: 5-oxoprolinase subunit A (244 aa).

It belongs to the LamB/PxpA family. In terms of assembly, forms a complex composed of PxpA, PxpB and PxpC.

It carries out the reaction 5-oxo-L-proline + ATP + 2 H2O = L-glutamate + ADP + phosphate + H(+). Functionally, catalyzes the cleavage of 5-oxoproline to form L-glutamate coupled to the hydrolysis of ATP to ADP and inorganic phosphate. The sequence is that of 5-oxoprolinase subunit A from Salmonella agona (strain SL483).